Consider the following 104-residue polypeptide: Sweet protein mabinlin-1 (104 aa).

4 cysteine pairs are disulfide-bonded: C4–C53, C17–C42, C43–C91, and C55–C99.

It belongs to the 2S seed storage albumins family. Heterodimer of a small A and a large B chain linked by disulfide bonds.

In terms of biological role, 2S seed storage protein having sweetness-inducing activity. This form is not heat stable. The polypeptide is Sweet protein mabinlin-1 (Capparis masaikai (Mabinlang)).